The primary structure comprises 403 residues: Acetate kinase (403 aa).

Mg(2+) is bound at residue Asn7. Position 14 (Lys14) interacts with ATP. Arg90 lines the substrate pocket. Residue Asp147 is the Proton donor/acceptor of the active site. Residues 207–211 (HIGNG), 283–285 (DMR), and 331–335 (GVGEN) contribute to the ATP site. Position 386 (Glu386) interacts with Mg(2+).

It belongs to the acetokinase family. In terms of assembly, homodimer. The cofactor is Mg(2+). Mn(2+) serves as cofactor.

Its subcellular location is the cytoplasm. It carries out the reaction acetate + ATP = acetyl phosphate + ADP. It participates in metabolic intermediate biosynthesis; acetyl-CoA biosynthesis; acetyl-CoA from acetate: step 1/2. Its function is as follows. Catalyzes the formation of acetyl phosphate from acetate and ATP. Can also catalyze the reverse reaction. The chain is Acetate kinase from Thermotoga petrophila (strain ATCC BAA-488 / DSM 13995 / JCM 10881 / RKU-1).